The following is a 291-amino-acid chain: Gamma-sarcoglycan (291 aa).

A helical; Signal-anchor for type II membrane protein transmembrane segment spans residues 38–58 (LFVLLLLIVLLVNFALTIWIL). Topologically, residues 59–291 (RVMWFSPVGM…TCHEHSHLCL (233 aa)) are extracellular. N-linked (GlcNAc...) asparagine glycosylation occurs at Asn110. Disulfide bonds link Cys265–Cys290 and Cys267–Cys283.

This sequence belongs to the sarcoglycan beta/delta/gamma/zeta family. Interacts with the syntrophin SNTA1. Cross-link to form 2 major subcomplexes: one consisting of SGCB, SGCD and SGCG and the other consisting of SGCB and SGCD. The association between SGCB and SGCG is particularly strong while SGCA is loosely associated with the other sarcoglycans. Interacts with FLNC. In terms of processing, disulfide bonds are present.

It localises to the cell membrane. The protein resides in the sarcolemma. Its subcellular location is the cytoplasm. The protein localises to the cytoskeleton. Functionally, component of the sarcoglycan complex, a subcomplex of the dystrophin-glycoprotein complex which forms a link between the F-actin cytoskeleton and the extracellular matrix. The chain is Gamma-sarcoglycan (SGCG) from Bos taurus (Bovine).